The primary structure comprises 416 residues: PTS system N-acetylglucosamine-specific EIIC component (416 aa).

Residues 16–406 (SGLFQGLQKV…FNLKTPGREP (391 aa)) form the PTS EIIC type-1 domain. Helical transmembrane passes span 68 to 88 (AGGA…AIGF), 96 to 116 (TALA…AFPV), 130 to 150 (TYND…AVLW), 170 to 190 (LVPI…GLVW), 196 to 216 (GISN…ALFG), 266 to 286 (IFQA…ALAM), 298 to 318 (VLGM…TEPI), 323 to 343 (MFIA…SMAI), 344 to 364 (TWGL…DYAL), and 375 to 395 (IIPI…FAIV).

It localises to the cell membrane. Its function is as follows. The phosphoenolpyruvate-dependent sugar phosphotransferase system (sugar PTS), a major carbohydrate active transport system, catalyzes the phosphorylation of incoming sugar substrates concomitantly with their translocation across the cell membrane. This system is involved in N-acetylglucosamine (GlcNAc) transport. High-affinity permease, which exhibits a narrow specificity for GlcNAc. Essential for C-signaling between vegetative growth and development. The chain is PTS system N-acetylglucosamine-specific EIIC component from Streptomyces coelicolor (strain ATCC BAA-471 / A3(2) / M145).